The following is a 195-amino-acid chain: Adenylate kinase (195 aa).

8–16 (GIPGVGKTT) contributes to the ATP binding site.

It belongs to the archaeal adenylate kinase family.

Its subcellular location is the cytoplasm. It carries out the reaction AMP + ATP = 2 ADP. The chain is Adenylate kinase from Saccharolobus islandicus (strain M.14.25 / Kamchatka #1) (Sulfolobus islandicus).